Here is a 332-residue protein sequence, read N- to C-terminus: Tryptophan--tRNA ligase (332 aa).

ATP is bound by residues 11–13 (TST) and 19–20 (GN). Residues 12-20 (STGKLTLGN) carry the 'HIGH' region motif. Asp-140 provides a ligand contact to L-tryptophan. Residues 152–154 (GQD), Ile-191, and 200–204 (KMSKS) contribute to the ATP site. A 'KMSKS' region motif is present at residues 200–204 (KMSKS).

This sequence belongs to the class-I aminoacyl-tRNA synthetase family. In terms of assembly, homodimer.

Its subcellular location is the cytoplasm. It catalyses the reaction tRNA(Trp) + L-tryptophan + ATP = L-tryptophyl-tRNA(Trp) + AMP + diphosphate + H(+). Its function is as follows. Catalyzes the attachment of tryptophan to tRNA(Trp). The polypeptide is Tryptophan--tRNA ligase (Mycoplasmopsis pulmonis (strain UAB CTIP) (Mycoplasma pulmonis)).